We begin with the raw amino-acid sequence, 294 residues long: 4-hydroxy-tetrahydrodipicolinate synthase (294 aa).

Thr49 lines the pyruvate pocket. The Proton donor/acceptor role is filled by Tyr136. Lys164 acts as the Schiff-base intermediate with substrate in catalysis. Ile207 is a binding site for pyruvate.

Belongs to the DapA family. Homotetramer; dimer of dimers.

It is found in the cytoplasm. It catalyses the reaction L-aspartate 4-semialdehyde + pyruvate = (2S,4S)-4-hydroxy-2,3,4,5-tetrahydrodipicolinate + H2O + H(+). Its pathway is amino-acid biosynthesis; L-lysine biosynthesis via DAP pathway; (S)-tetrahydrodipicolinate from L-aspartate: step 3/4. Functionally, catalyzes the condensation of (S)-aspartate-beta-semialdehyde [(S)-ASA] and pyruvate to 4-hydroxy-tetrahydrodipicolinate (HTPA). The chain is 4-hydroxy-tetrahydrodipicolinate synthase from Natronomonas pharaonis (strain ATCC 35678 / DSM 2160 / CIP 103997 / JCM 8858 / NBRC 14720 / NCIMB 2260 / Gabara) (Halobacterium pharaonis).